The primary structure comprises 341 residues: tRNA N6-adenosine threonylcarbamoyltransferase (341 aa).

Fe cation is bound by residues H115 and H119. Residues 138–142 (LVSGG), D171, G184, and N276 contribute to the substrate site. D304 contributes to the Fe cation binding site.

The protein belongs to the KAE1 / TsaD family. Fe(2+) serves as cofactor.

Its subcellular location is the cytoplasm. It carries out the reaction L-threonylcarbamoyladenylate + adenosine(37) in tRNA = N(6)-L-threonylcarbamoyladenosine(37) in tRNA + AMP + H(+). Its function is as follows. Required for the formation of a threonylcarbamoyl group on adenosine at position 37 (t(6)A37) in tRNAs that read codons beginning with adenine. Is involved in the transfer of the threonylcarbamoyl moiety of threonylcarbamoyl-AMP (TC-AMP) to the N6 group of A37, together with TsaE and TsaB. TsaD likely plays a direct catalytic role in this reaction. This is tRNA N6-adenosine threonylcarbamoyltransferase from Stenotrophomonas maltophilia (strain K279a).